A 1178-amino-acid polypeptide reads, in one-letter code: Tricalbin-2 (1178 aa).

Residues 1–17 (MSPNSSKTRTDQISSMP) show a composition bias toward polar residues. A disordered region spans residues 1 to 27 (MSPNSSKTRTDQISSMPGINEATKVES). The Cytoplasmic portion of the chain corresponds to 1–98 (MSPNSSKTRT…NLLPDKFYGD (98 aa)). A helical transmembrane segment spans residues 99–119 (WYHEVAILIIAGLCSFVLGYF). Lys-120 is a topological domain (extracellular). A helical membrane pass occupies residues 121–141 (FSLASVLIVMLTTGMLYRTSS). The Cytoplasmic segment spans residues 142 to 1178 (KKYRESLRDL…TGDKKSEEKQ (1037 aa)). The 204-residue stretch at 164-367 (DYESVEWLNT…PPFSLQLNIP (204 aa)) folds into the SMP-LTD domain. 3 consecutive C2 domains span residues 358–481 (PPFS…EKVH), 504–628 (PKKL…LKVT), and 632–749 (RPVD…DKYT). Positions 784 to 821 (LSLEEAKEVDEINEKKDKLEKQKSTLDDKNISKEEKER) form a coiled coil. Residues 962–1086 (QVSWFPVTAT…DPESDTTFNI (125 aa)) form the C2 4 domain. At Ser-991 the chain carries Phosphoserine.

This sequence belongs to the tricalbin family. In terms of assembly, interacts with TCB1 and TCB3 via its C-terminal domain.

The protein localises to the cell membrane. It is found in the endoplasmic reticulum membrane. Its function is as follows. May play a role in membrane trafficking. This is Tricalbin-2 (TCB2) from Saccharomyces cerevisiae (strain ATCC 204508 / S288c) (Baker's yeast).